Here is a 221-residue protein sequence, read N- to C-terminus: Small ribosomal subunit protein uS3c (221 aa).

Residues 43-121 (IQNYIQKNMR…KLKIAITKIA (79 aa)) enclose the KH type-2 domain.

This sequence belongs to the universal ribosomal protein uS3 family. As to quaternary structure, part of the 30S ribosomal subunit.

Its subcellular location is the plastid. The protein localises to the chloroplast. The chain is Small ribosomal subunit protein uS3c (rps3) from Jasminum nudiflorum (Winter jasmine).